Reading from the N-terminus, the 248-residue chain is Metallo-beta-lactamase type 2 (248 aa).

A signal peptide spans 1 to 21 (MKGLKGLLVLALGFTGLQVFG). Zn(2+) contacts are provided by His-97, His-99, Asp-101, His-160, and Cys-179. Residue Lys-182 coordinates substrate. A Zn(2+)-binding site is contributed by His-221.

This sequence belongs to the metallo-beta-lactamase superfamily. Class-B beta-lactamase family. As to quaternary structure, monomer. Requires Zn(2+) as cofactor.

It is found in the periplasm. It carries out the reaction a beta-lactam + H2O = a substituted beta-amino acid. Its function is as follows. Confers resistance to the different beta-lactams antibiotics (penicillin, cephalosporin and carbapenem) via the hydrolysis of the beta-lactam ring. The protein is Metallo-beta-lactamase type 2 (blaB7) of Elizabethkingia meningoseptica (Chryseobacterium meningosepticum).